We begin with the raw amino-acid sequence, 635 residues long: PTS system mannitol-specific EIICBA component (635 aa).

The region spanning 12–342 is the PTS EIIC type-2 domain; that stretch reads FGRFLSNMVM…LFKTSKVKER (331 aa). Transmembrane regions (helical) follow at residues 24 to 45, 50 to 70, 134 to 155, 165 to 185, 273 to 292, and 313 to 334; these read IGAF…WLPN, KLVG…TGGK, SAGI…PAVE, VNFM…EPAK, VILG…GGLV, and FANI…AVLF. Residues 378–473 form the PTS EIIB type-2 domain; it reads RKIIVACDAG…RLVAAQRHID (96 aa). The active-site Phosphocysteine intermediate; for EIIB activity is cysteine 384. Residue cysteine 384 is modified to Phosphocysteine; by EIIA. Residues 494 to 635 enclose the PTS EIIA type-2 domain; that stretch reads FQLGADNIFL…VDEVLALLNK (142 aa). The active-site Tele-phosphohistidine intermediate; for EIIA activity is histidine 554. Phosphohistidine; by HPr is present on histidine 554.

As to quaternary structure, homodimer. An intramolecular phosphotransfer takes places between His-554 and Cys-384.

It localises to the cell inner membrane. The catalysed reaction is D-mannitol(out) + N(pros)-phospho-L-histidyl-[protein] = D-mannitol 1-phosphate(in) + L-histidyl-[protein]. Functionally, the phosphoenolpyruvate-dependent sugar phosphotransferase system (sugar PTS), a major carbohydrate active transport system, catalyzes the phosphorylation of incoming sugar substrates concomitantly with their translocation across the cell membrane. This system is involved in D-mannitol transport. This is PTS system mannitol-specific EIICBA component from Klebsiella pneumoniae.